The chain runs to 1015 residues: Fibronectin-binding protein A (1015 aa).

Positions 1–36 (MKNNLRYGIRKHKLGAASVFLGTMIVVGMGQDKEAA) are cleaved as a signal peptide. A YSIRK-G/S signaling motif motif is present at residues 7–18 (YGIRKHKLGAAS). The tract at residues 37–512 (ASEQKTTTVE…SNKADGNGKN (476 aa)) is ligand-binding A region. The span at 75-92 (SYSATATEQPSNATQVTT) shows a compositional bias: polar residues. Residues 75 to 199 (SYSATATEQP…KVETGTDVTS (125 aa)) are disordered. The segment covering 112–126 (TVKEEVVKEEAKPQV) has biased composition (basic and acidic residues). Over residues 129-139 (TTQSQDNSGDQ) the composition is skewed to polar residues. The segment covering 179–193 (DVVEAKEASDEKVET) has biased composition (basic and acidic residues). Residues 194–512 (GTDVTSKVTV…SNKADGNGKN (319 aa)) form a fibrinogen/elastin/tropoelastin-binding region. Residues 513–873 (GQIIQNNDFE…EGQQTIEEDT (361 aa)) form a fibronectin-binding region. A B-1 repeat occupies 546-575 (ENQDNTPLDIDYHTAIDGEGGYVDGYIETI). The tract at residues 546 to 605 (ENQDNTPLDIDYHTAIDGEGGYVDGYIETIEETDSSAIDIDYHTAVDSEAGHVGGYTESS) is 2 X approximate tandem repeats. The stretch at 576 to 605 (EETDSSAIDIDYHTAVDSEAGHVGGYTESS) is one B-2 repeat. Disordered stretches follow at residues 596-623 (GHVG…NSKH), 741-815 (LGYE…IDFD), 828-953 (EIIE…GKVV), and 966-992 (VAPT…NKGM). One copy of the D-1 repeat lies at 746–783 (GQNSGNQSFEEDTEEDKPKYEQGGNIVDIDFDSVPQIQ). The interval 746–875 (GQNSGNQSFE…QQTIEEDTTP (130 aa)) is 4 X approximate tandem repeats. Polar residues predominate over residues 780-791 (PQIQGQNNGNQS). The stretch at 784–821 (GQNNGNQSFEEDTEKDKPKYEQGGNIIDIDFDSVPQIH) is one D-2 repeat. The stretch at 822–860 (GFNKHTEIIEEDTNKDKPNYQFGGHNSVDFEEDTLPKVS) is one D-3 repeat. The span at 828-839 (EIIEEDTNKDKP) shows a compositional bias: basic and acidic residues. One copy of the D-4; truncated repeat lies at 861 to 875 (GQNEGQQTIEEDTTP). Over residues 875–935 (PPTPPTPEVP…PAEPGKPVPP (61 aa)) the composition is skewed to pro residues. WR repeat units lie at residues 876–889 (PTPP…EPET), 890–903 (PTPP…EPET), 904–917 (PTPP…EPET), 918–931 (PTPP…EPGK), and 932–945 (PVPP…KPSK). The tract at residues 876-945 (PTPPTPEVPS…AKEEPKKPSK (70 aa)) is 5 X tandem repeats, Pro-rich (WR). The LPXTG sorting signal signature appears at 979 to 983 (LPETG). T982 is subject to Pentaglycyl murein peptidoglycan amidated threonine. A propeptide spans 983 to 1015 (GGEESTNKGMLFGGLFSILGLALLRRNKKNNKA) (removed by sortase).

It is found in the secreted. Its subcellular location is the cell wall. Promotes bacterial attachment to multiple substrates, such as fibronectin (Fn), fibrinogen (Fg), elastin peptides and tropoelastin. This confers to S.aureus the ability to invade endothelial cells. Promotes adherence to and aggregation of activated platelets. The chain is Fibronectin-binding protein A (fnbA) from Staphylococcus aureus (strain MSSA476).